A 102-amino-acid polypeptide reads, in one-letter code: Urease subunit beta (102 aa).

The protein belongs to the urease beta subunit family. As to quaternary structure, heterotrimer of UreA (gamma), UreB (beta) and UreC (alpha) subunits. Three heterotrimers associate to form the active enzyme.

Its subcellular location is the cytoplasm. The enzyme catalyses urea + 2 H2O + H(+) = hydrogencarbonate + 2 NH4(+). Its pathway is nitrogen metabolism; urea degradation; CO(2) and NH(3) from urea (urease route): step 1/1. In Acinetobacter baylyi (strain ATCC 33305 / BD413 / ADP1), this protein is Urease subunit beta.